We begin with the raw amino-acid sequence, 289 residues long: Pyridoxal kinase PdxY (289 aa).

Residues Ser9 and 44 to 45 (TQ) each bind substrate. 4 residues coordinate ATP: Asp112, Val144, Glu149, and Lys182. Asp221 provides a ligand contact to substrate.

This sequence belongs to the pyridoxine kinase family. PdxY subfamily. Homodimer. Mg(2+) serves as cofactor.

The catalysed reaction is pyridoxal + ATP = pyridoxal 5'-phosphate + ADP + H(+). Its pathway is cofactor metabolism; pyridoxal 5'-phosphate salvage; pyridoxal 5'-phosphate from pyridoxal: step 1/1. In terms of biological role, pyridoxal kinase involved in the salvage pathway of pyridoxal 5'-phosphate (PLP). Catalyzes the phosphorylation of pyridoxal to PLP. In Vibrio parahaemolyticus serotype O3:K6 (strain RIMD 2210633), this protein is Pyridoxal kinase PdxY.